We begin with the raw amino-acid sequence, 243 residues long: tRNA (guanine-N(1)-)-methyltransferase (243 aa).

S-adenosyl-L-methionine is bound by residues Gly-113 and 133 to 138 (IGDFVL).

It belongs to the RNA methyltransferase TrmD family. As to quaternary structure, homodimer.

It localises to the cytoplasm. The enzyme catalyses guanosine(37) in tRNA + S-adenosyl-L-methionine = N(1)-methylguanosine(37) in tRNA + S-adenosyl-L-homocysteine + H(+). Specifically methylates guanosine-37 in various tRNAs. This chain is tRNA (guanine-N(1)-)-methyltransferase, found in Bacillus licheniformis (strain ATCC 14580 / DSM 13 / JCM 2505 / CCUG 7422 / NBRC 12200 / NCIMB 9375 / NCTC 10341 / NRRL NRS-1264 / Gibson 46).